The chain runs to 958 residues: UvrABC system protein A (958 aa).

Residues 1 to 232 enclose the ABC transporter 1 domain; it reads MQSKSIKIQG…IETALKLGEG (232 aa). 33-40 serves as a coordination point for ATP; that stretch reads GLSGSGKS. The segment at 252–279 adopts a C4-type zinc-finger fold; that stretch reads CPICGFSIGELEPRLFSFNSPFGACPSC. 2 ABC transporter domains span residues 315-593 and 604-935; these read QYYP…KYLS and RRKP…GKYL. 639–646 provides a ligand contact to ATP; sequence GVSGSGKS. Residues 738–764 form a C4-type zinc finger; the sequence is CEACRGDGILKIEMHFLPDVYVPCEVC.

The protein belongs to the ABC transporter superfamily. UvrA family. In terms of assembly, forms a heterotetramer with UvrB during the search for lesions.

The protein resides in the cytoplasm. Functionally, the UvrABC repair system catalyzes the recognition and processing of DNA lesions. UvrA is an ATPase and a DNA-binding protein. A damage recognition complex composed of 2 UvrA and 2 UvrB subunits scans DNA for abnormalities. When the presence of a lesion has been verified by UvrB, the UvrA molecules dissociate. This chain is UvrABC system protein A, found in Oceanobacillus iheyensis (strain DSM 14371 / CIP 107618 / JCM 11309 / KCTC 3954 / HTE831).